Here is a 147-residue protein sequence, read N- to C-terminus: Basic phospholipase A2 beta-bungarotoxin A1 chain (147 aa).

The signal sequence occupies residues 1–19 (MNPAHLLVLSAVCVSLLGA). The propeptide occupies 20–27 (ANIPPHPL). Disulfide bonds link Cys-54-Cys-146, Cys-56-Cys-72, Cys-71-Cys-127, Cys-78-Cys-120, Cys-88-Cys-113, and Cys-106-Cys-118. Ca(2+)-binding residues include Tyr-55, Gly-57, and Gly-59. His-75 is a catalytic residue. Position 76 (Asp-76) interacts with Ca(2+). Asp-121 is a catalytic residue.

It belongs to the phospholipase A2 family. Group I subfamily. D49 sub-subfamily. As to quaternary structure, heterodimer; disulfide-linked. The A chains have phospholipase A2 activity and the B chains show homology with the basic protease inhibitors. The A1 chain is found in beta-1 and beta-2 bungarotoxins. The cofactor is Ca(2+). In terms of tissue distribution, expressed by the venom gland.

It is found in the secreted. The catalysed reaction is a 1,2-diacyl-sn-glycero-3-phosphocholine + H2O = a 1-acyl-sn-glycero-3-phosphocholine + a fatty acid + H(+). Functionally, snake venom phospholipase A2 (PLA2) that inhibits neuromuscular transmission by blocking acetylcholine release from the nerve termini. PLA2 catalyzes the calcium-dependent hydrolysis of the 2-acyl groups in 3-sn-phosphoglycerides. In Bungarus multicinctus (Many-banded krait), this protein is Basic phospholipase A2 beta-bungarotoxin A1 chain.